The sequence spans 356 residues: Cyanide hydratase (356 aa).

Positions 15–290 constitute a CN hydrolase domain; sequence FKVAAVQAEP…EVVLYANISL (276 aa). Glu55 (proton acceptor) is an active-site residue. Lys137 is a catalytic residue. The active-site Nucleophile is the Cys172. Residues 331–356 are disordered; sequence DEQAASKAQQAEIDNAGKGSIVPSKL.

It belongs to the carbon-nitrogen hydrolase superfamily. Nitrilase family.

The enzyme catalyses formamide = hydrogen cyanide + H2O. Functionally, catalyzes the hydration of cyanide to formamide. Degradation of cyanide may be important for plant pathogenic fungi in infection of cyanogenic plants. This Armillaria gallica (Bulbous honey fungus) protein is Cyanide hydratase.